The chain runs to 486 residues: Protein pleiotropic regulatory locus 1 (486 aa).

Residues 62–101 are disordered; the sequence is EPVVSQPPRQPDRINEQPGPSNALSLAAPEGSKSTQKGAT. WD repeat units follow at residues 174–204, 216–246, 258–288, 300–330, 342–371, 384–413, and 433–463; these read GHLGWVRSVAFDPSNEWFCTGSADRTIKIWD, GHIEQVRGLAVSNRHTYMFSAGDDKQVKCWD, GHLSGVYCLALHPTLDVLLTGGRDSVCRVWD, GHDNTVCSVFTRPTDPQVVTGSHDTTIKFWD, HHKKSVRAMTLHPKENAFASASADNTKKFS, QQKTIINAMAVNEDGVMVTGGDNGSIWFWD, and ESEAGIYAACYDNTGSRLVTCEADKTIKMWK. 2 consecutive short sequence motifs (DWD box) follow at residues 275-290 and 317-332; these read LLTGGRDSVCRVWDIR and VVTGSHDTTIKFWDLR. The segment at 465–486 is disordered; sequence DENATPETHPINFKPPKEIRRF.

Belongs to the WD repeat PRL1/PRL2 family. In terms of assembly, component of the multiprotein assembly MOS4-associated complex (MAC) at least composed of MOS4, CDC5, PRL1 and PRP19. Interacts with CDC5. Component of the CUL4-RBX1-DDB1-PRL1 E3 ubiquitin-protein ligase complex. Interacts with DDB1A through its DWD motif. Interacts with AKIN10, AKIN11 and PIPC. Interacts with KAP2.

The protein localises to the nucleus. The protein operates within protein modification; protein ubiquitination. In terms of biological role, pleiotropic regulator of glucose, stress and hormone responses. Also regulates cytochrome P450 CYP90A1/CPD. Coordinates the expression of hormone- and stress-related genes and genes related to cell wall modification and growth, leading to altered sugar-dependent growth and developmental responses. Component of the MAC complex that probably regulates defense responses through transcriptional control and thereby is essential for plant innate immunity. By suppressing the expression of several (1)O(2)-responsive genes, PRL1 seems to play a major role in modulating responses of plants to environmental changes by interconnecting (1)O(2)-mediated retrograde signaling with other signaling pathways. Acts as a negative regulator of SNF1-related protein kinases AKIN10 and AKIN11 via the inhibition of their interaction with SKP1/ASK1. Component of the CUL4-RBX1-DDB1-PRL1 E3 ubiquitin-protein ligase complex, PRL1 may function as the substrate recognition module within this complex, leading to the AKIN10 degradation. The polypeptide is Protein pleiotropic regulatory locus 1 (PRL1) (Arabidopsis thaliana (Mouse-ear cress)).